The following is a 75-amino-acid chain: UPF0346 protein LEUM_0763 (75 aa).

The protein belongs to the UPF0346 family.

The sequence is that of UPF0346 protein LEUM_0763 from Leuconostoc mesenteroides subsp. mesenteroides (strain ATCC 8293 / DSM 20343 / BCRC 11652 / CCM 1803 / JCM 6124 / NCDO 523 / NBRC 100496 / NCIMB 8023 / NCTC 12954 / NRRL B-1118 / 37Y).